The following is a 321-amino-acid chain: D-alanine--D-alanine ligase (321 aa).

Residues 103–303 form the ATP-grasp domain; it reads KKILTPENIP…YVALCRMIVE (201 aa). An ATP-binding site is contributed by 129–186; it reads PLPRPYVLKPVNEGSSVGVAIIDESFNDGQPIRKDQIDPWKNFKTLLAEPFIKGRELT. Residues D254, E270, and N272 each coordinate Mg(2+).

This sequence belongs to the D-alanine--D-alanine ligase family. Mg(2+) serves as cofactor. Requires Mn(2+) as cofactor.

The protein resides in the cytoplasm. The catalysed reaction is 2 D-alanine + ATP = D-alanyl-D-alanine + ADP + phosphate + H(+). It participates in cell wall biogenesis; peptidoglycan biosynthesis. Its function is as follows. Cell wall formation. This is D-alanine--D-alanine ligase from Zymomonas mobilis subsp. mobilis (strain ATCC 31821 / ZM4 / CP4).